The following is a 198-amino-acid chain: Nucleoid occlusion factor SlmA (198 aa).

The HTH tetR-type domain occupies 10 to 70 (NRREEILQSL…SLIEFIEDSL (61 aa)). Residues 33 to 52 (TTAKLAASVGVSEAALYRHF) constitute a DNA-binding region (H-T-H motif). Residues 117 to 144 (EQDRLQGRINQLFERIEAQLRQVLREKR) adopt a coiled-coil conformation.

This sequence belongs to the nucleoid occlusion factor SlmA family. As to quaternary structure, homodimer. Interacts with FtsZ.

The protein localises to the cytoplasm. It is found in the nucleoid. Its function is as follows. Required for nucleoid occlusion (NO) phenomenon, which prevents Z-ring formation and cell division over the nucleoid. Acts as a DNA-associated cell division inhibitor that binds simultaneously chromosomal DNA and FtsZ, and disrupts the assembly of FtsZ polymers. SlmA-DNA-binding sequences (SBS) are dispersed on non-Ter regions of the chromosome, preventing FtsZ polymerization at these regions. This chain is Nucleoid occlusion factor SlmA, found in Salmonella typhi.